Here is a 400-residue protein sequence, read N- to C-terminus: Multiphosphoryl transfer protein (400 aa).

The PTS EIIA type-2 domain occupies 2 to 142; that stretch reads LELTTQDIQL…QQIIAIIKGE (141 aa). Residue His-62 is the Tele-phosphohistidine intermediate; for EIIA activity of the active site. His-62 is modified (phosphohistidine; by HPr). Positions 310 to 400 constitute an HPr domain; it reads AHTATFRIKN…VAINAGLGEG (91 aa). His-324 (pros-phosphohistidine intermediate; for HPr activity) is an active-site residue. Phosphohistidine; by EI is present on His-324.

It is found in the cytoplasm. The phosphoenolpyruvate-dependent sugar phosphotransferase system (sugar PTS), a major carbohydrate active transport system, catalyzes the phosphorylation of incoming sugar substrates concomitantly with their translocation across the cell membrane. The enzyme II FruAB PTS system is involved in fructose transport. This Vibrio cholerae serotype O1 (strain ATCC 39315 / El Tor Inaba N16961) protein is Multiphosphoryl transfer protein.